The following is a 243-amino-acid chain: Probable transcriptional regulatory protein Ldb0677 (243 aa).

Residues 1 to 22 (MSGHSKWHNIQGRKNAQDAKRG) are disordered.

The protein belongs to the TACO1 family.

The protein localises to the cytoplasm. This chain is Probable transcriptional regulatory protein Ldb0677, found in Lactobacillus delbrueckii subsp. bulgaricus (strain ATCC 11842 / DSM 20081 / BCRC 10696 / JCM 1002 / NBRC 13953 / NCIMB 11778 / NCTC 12712 / WDCM 00102 / Lb 14).